A 292-amino-acid chain; its full sequence is Elongation factor Ts (292 aa).

Residues 82–85 form an involved in Mg(2+) ion dislocation from EF-Tu region; sequence TDFV.

The protein belongs to the EF-Ts family.

Its subcellular location is the cytoplasm. Functionally, associates with the EF-Tu.GDP complex and induces the exchange of GDP to GTP. It remains bound to the aminoacyl-tRNA.EF-Tu.GTP complex up to the GTP hydrolysis stage on the ribosome. In Legionella pneumophila (strain Lens), this protein is Elongation factor Ts.